The following is a 160-amino-acid chain: Transmembrane protein 220 (160 aa).

Helical transmembrane passes span 3–23, 30–50, 62–82, 100–120, and 125–145; these read PALW…AALV, AEVW…VGLN, ISAI…SYLL, GLVI…NPVG, and LAIA…IYIN.

The protein localises to the membrane. The protein is Transmembrane protein 220 (TMEM220) of Homo sapiens (Human).